The chain runs to 561 residues: Asparagine synthetase [glutamine-hydrolyzing] (561 aa).

The active-site For GATase activity is the Cys2. Residues 2 to 191 form the Glutamine amidotransferase type-2 domain; sequence CGIWALFGSD…PGHYEVLDLK (190 aa). L-glutamine contacts are provided by residues 49–53, 75–77, and Asp97; these read RLAVV and NGE. Residues 213–536 form the Asparagine synthetase domain; it reads HAIYDSVEKL…PGRADWLTHY (324 aa). ATP-binding positions include Leu256, Ile288, and 363–364; that span reads SG. Lys385 is subject to N6-acetyllysine. At Thr545 the chain carries Phosphothreonine. Residue Ser557 is modified to Phosphoserine.

It carries out the reaction L-aspartate + L-glutamine + ATP + H2O = L-asparagine + L-glutamate + AMP + diphosphate + H(+). It participates in amino-acid biosynthesis; L-asparagine biosynthesis; L-asparagine from L-aspartate (L-Gln route): step 1/1. The sequence is that of Asparagine synthetase [glutamine-hydrolyzing] (Asns) from Mus musculus (Mouse).